A 168-amino-acid polypeptide reads, in one-letter code: Regulatory protein RecX (168 aa).

This sequence belongs to the RecX family.

The protein resides in the cytoplasm. Its function is as follows. Modulates RecA activity. In Serratia proteamaculans (strain 568), this protein is Regulatory protein RecX.